The chain runs to 101 residues: Salivary thrombin inhibitor anophelin (101 aa).

The signal sequence occupies residues 1 to 21 (MASKVIVIALLCIALAAFVQG). Residues 26–101 (THGEEPEYDE…SDSSSGSTEN (76 aa)) form a disordered region. Residues 31 to 40 (PEYDEDDGAD) are compositionally biased toward acidic residues. The blocks active site cleft of host thrombin in a reverse direction compared to substrates stretch occupies residues 75–78 (DPGR). Basic and acidic residues predominate over residues 75 to 87 (DPGRRPEFLKQHN). The span at 88–101 (NENQSDSSSGSTEN) shows a compositional bias: polar residues. An N-linked (GlcNAc...) asparagine glycan is attached at asparagine 90.

Belongs to the anophelin family. In terms of assembly, interacts with human F2 (thrombin); the interaction results in thrombin inhibition.

It is found in the secreted. Salivary protein with anticoagulant activity that inhibits host thrombin (F2). This Anopheles stephensi (Indo-Pakistan malaria mosquito) protein is Salivary thrombin inhibitor anophelin.